Reading from the N-terminus, the 89-residue chain is Small ribosomal subunit protein uS15 (89 aa).

This sequence belongs to the universal ribosomal protein uS15 family. In terms of assembly, part of the 30S ribosomal subunit. Forms a bridge to the 50S subunit in the 70S ribosome, contacting the 23S rRNA.

Functionally, one of the primary rRNA binding proteins, it binds directly to 16S rRNA where it helps nucleate assembly of the platform of the 30S subunit by binding and bridging several RNA helices of the 16S rRNA. In terms of biological role, forms an intersubunit bridge (bridge B4) with the 23S rRNA of the 50S subunit in the ribosome. This is Small ribosomal subunit protein uS15 from Chloroflexus aurantiacus (strain ATCC 29366 / DSM 635 / J-10-fl).